The sequence spans 196 residues: Putative NADH dehydrogenase/NAD(P)H nitroreductase Rpal_4764 (196 aa).

It belongs to the nitroreductase family. HadB/RutE subfamily. The cofactor is FMN.

In Rhodopseudomonas palustris (strain TIE-1), this protein is Putative NADH dehydrogenase/NAD(P)H nitroreductase Rpal_4764.